We begin with the raw amino-acid sequence, 376 residues long: Protein RecA (376 aa).

78-85 provides a ligand contact to ATP; sequence GPESSGKT. The tract at residues 355–376 is disordered; sequence PVELVPNVDFDDEADTEADAED. Residues 363-376 show a composition bias toward acidic residues; that stretch reads DFDDEADTEADAED.

It belongs to the RecA family.

The protein localises to the cytoplasm. Its function is as follows. Can catalyze the hydrolysis of ATP in the presence of single-stranded DNA, the ATP-dependent uptake of single-stranded DNA by duplex DNA, and the ATP-dependent hybridization of homologous single-stranded DNAs. It interacts with LexA causing its activation and leading to its autocatalytic cleavage. This Corynebacterium glutamicum (strain R) protein is Protein RecA.